The following is a 203-amino-acid chain: Selenocysteine-containing peroxiredoxin PrxU (203 aa).

Residues 2–160 (VSVGKKAPDF…TLRQIQAFQL (159 aa)) form the Thioredoxin domain. The active site involves selenocysteine 47. A non-standard amino acid (selenocysteine) is located at residue selenocysteine 47.

Belongs to the peroxiredoxin family. AhpC/Prx1 subfamily.

The enzyme catalyses a hydroperoxide + [thioredoxin]-dithiol = an alcohol + [thioredoxin]-disulfide + H2O. In terms of biological role, thiol-specific peroxidase that catalyzes the reduction of hydrogen peroxide and organic hydroperoxides to water and alcohols, respectively. Plays a role in cell protection against oxidative stress by detoxifying peroxides. The polypeptide is Selenocysteine-containing peroxiredoxin PrxU (Peptoclostridium acidaminophilum (Eubacterium acidaminophilum)).